The primary structure comprises 243 residues: Orotidine 5'-phosphate decarboxylase (243 aa).

Substrate-binding positions include Asp19, Lys41, 69–78, Thr124, Arg185, Gln194, Gly214, and Arg215; that span reads DLKFFDIPAT. Lys71 acts as the Proton donor in catalysis.

It belongs to the OMP decarboxylase family. Type 1 subfamily. In terms of assembly, homodimer.

It catalyses the reaction orotidine 5'-phosphate + H(+) = UMP + CO2. The protein operates within pyrimidine metabolism; UMP biosynthesis via de novo pathway; UMP from orotate: step 2/2. Functionally, catalyzes the decarboxylation of orotidine 5'-monophosphate (OMP) to uridine 5'-monophosphate (UMP). This Xanthomonas axonopodis pv. citri (strain 306) protein is Orotidine 5'-phosphate decarboxylase.